The primary structure comprises 130 residues: Small ribosomal subunit protein uS9 (130 aa).

The interval 108–130 (PRMKERRKYGLKKARRAPQFSKR) is disordered. Over residues 111 to 130 (KERRKYGLKKARRAPQFSKR) the composition is skewed to basic residues.

Belongs to the universal ribosomal protein uS9 family.

The sequence is that of Small ribosomal subunit protein uS9 from Desulforamulus reducens (strain ATCC BAA-1160 / DSM 100696 / MI-1) (Desulfotomaculum reducens).